A 186-amino-acid polypeptide reads, in one-letter code: Transcription factor pgmR (186 aa).

Residues 19–46 constitute a DNA-binding region (zn(2)-C6 fungal-type); sequence CDECGAAKLKCDRGHPSCGRCISLGLKC. A disordered region spans residues 52 to 98; it reads RKAGKPRRDAQSATRPPPTPGDSGPPLDYNSFGPTSPPSSVGDGATL.

The protein localises to the nucleus. In terms of biological role, transcription factor that specifically regulates the expression of the pgm gene cluster that mediates the biosynthesis of cryptic naphthoquinones derived pigments responsible for the coloration of the fruiting bodies. In Aspergillus terreus (strain NIH 2624 / FGSC A1156), this protein is Transcription factor pgmR.